A 253-amino-acid chain; its full sequence is Ubiquinone/menaquinone biosynthesis C-methyltransferase UbiE (253 aa).

S-adenosyl-L-methionine is bound by residues Thr76, Asp97, and Asn125–Ala126.

Belongs to the class I-like SAM-binding methyltransferase superfamily. MenG/UbiE family.

The enzyme catalyses a 2-demethylmenaquinol + S-adenosyl-L-methionine = a menaquinol + S-adenosyl-L-homocysteine + H(+). The catalysed reaction is a 2-methoxy-6-(all-trans-polyprenyl)benzene-1,4-diol + S-adenosyl-L-methionine = a 5-methoxy-2-methyl-3-(all-trans-polyprenyl)benzene-1,4-diol + S-adenosyl-L-homocysteine + H(+). The protein operates within quinol/quinone metabolism; menaquinone biosynthesis; menaquinol from 1,4-dihydroxy-2-naphthoate: step 2/2. It participates in cofactor biosynthesis; ubiquinone biosynthesis. Functionally, methyltransferase required for the conversion of demethylmenaquinol (DMKH2) to menaquinol (MKH2) and the conversion of 2-polyprenyl-6-methoxy-1,4-benzoquinol (DDMQH2) to 2-polyprenyl-3-methyl-6-methoxy-1,4-benzoquinol (DMQH2). This chain is Ubiquinone/menaquinone biosynthesis C-methyltransferase UbiE, found in Rhodopseudomonas palustris (strain HaA2).